The primary structure comprises 434 residues: Methylenetetrahydrofolate--tRNA-(uracil-5-)-methyltransferase TrmFO (434 aa).

Gly10–Gly15 contributes to the FAD binding site.

This sequence belongs to the MnmG family. TrmFO subfamily. The cofactor is FAD.

Its subcellular location is the cytoplasm. It catalyses the reaction uridine(54) in tRNA + (6R)-5,10-methylene-5,6,7,8-tetrahydrofolate + NADH + H(+) = 5-methyluridine(54) in tRNA + (6S)-5,6,7,8-tetrahydrofolate + NAD(+). The catalysed reaction is uridine(54) in tRNA + (6R)-5,10-methylene-5,6,7,8-tetrahydrofolate + NADPH + H(+) = 5-methyluridine(54) in tRNA + (6S)-5,6,7,8-tetrahydrofolate + NADP(+). Functionally, catalyzes the folate-dependent formation of 5-methyl-uridine at position 54 (M-5-U54) in all tRNAs. The chain is Methylenetetrahydrofolate--tRNA-(uracil-5-)-methyltransferase TrmFO from Bacillus cereus (strain ATCC 10987 / NRS 248).